We begin with the raw amino-acid sequence, 316 residues long: Tetrahydromethanopterin S-methyltransferase subunit H (316 aa).

It belongs to the MtrH family. The complex is composed of 8 subunits; MtrA, MtrB, MtrC, MtrD, MtrE, MtrF, MtrG and MtrH.

The catalysed reaction is 5-methyl-5,6,7,8-tetrahydromethanopterin + coenzyme M + 2 Na(+)(in) = 5,6,7,8-tetrahydromethanopterin + methyl-coenzyme M + 2 Na(+)(out). Its pathway is one-carbon metabolism; methanogenesis from CO(2); methyl-coenzyme M from 5,10-methylene-5,6,7,8-tetrahydromethanopterin: step 2/2. Functionally, part of a complex that catalyzes the formation of methyl-coenzyme M and tetrahydromethanopterin from coenzyme M and methyl-tetrahydromethanopterin. This is an energy-conserving, sodium-ion translocating step. MtrH catalyzes the transfer of the methyl group from methyl-tetrahydromethanopterin to the corrinoid prosthetic group of MtrA. In Methanosarcina barkeri (strain Fusaro / DSM 804), this protein is Tetrahydromethanopterin S-methyltransferase subunit H.